The following is a 460-amino-acid chain: MTEDKSQVKIRFFTREKDELLHVQDTPMYAPISLKRYGLSEIVNHLLGSEKPVPFDFLIEGELLRTSLHDYLTKKGLSSEASLNVEYTRAILPPSYLNSFSNEDWVSSLDVGDGSKHIISGSYDGIVRTWDLSGNVQKQYSGHSGPIRAVKYISNTRLVSAGNDRTLRLWKTKNDDLKLTSQQQAQEDDDDEVNIEDGKTLAILEGHKAPVVSIDVSDNSRILSASYDNSIGFWSTIYKEMTVVDPLEDINNPNNKISTAARKRRKLTMKDGTIRRRAPLSLLESHTAPVEQVIFDSTDNTVGYSVSQDHTIKTWDLVTARCIDTRTTSYSLLSIAQLSTLNLLACGSSARHITLHDPRVGASSKVTQQQLIGHKNFVSSLDTCPENEYILCSGSHDGTVKVWDVRSTSPMYTITREDKSVQKGVNDKVFAVKWAEKVGIISAGQDKKIQINKGDNIFKN.

The segment at 8-89 (VKIRFFTREK…EASLNVEYTR (82 aa)) is ubiquitin-like (UBL) domain. A sufficient for interaction with ERB1 and association with 66S pre-ribosomes region spans residues 99–460 (SFSNEDWVSS…INKGDNIFKN (362 aa)). 7 WD repeats span residues 101–140 (SNED…QKQY), 142–180 (GHSG…LKLT), 206–244 (GHKA…MTVV), 285–325 (SHTA…CIDT), 327–366 (TTSY…SSKV), 373–413 (GHKN…PMYT), and 424–460 (GVND…IFKN).

Belongs to the WD repeat WDR12/YTM1 family. As to quaternary structure, component of the NOP7 complex, composed of ERB1, NOP7 and YTM1. The complex is held together by ERB1, which interacts with NOP7 via its N-terminal domain and with YTM1 via a high-affinity interaction between the seven-bladed beta-propeller domains of the 2 proteins. The NOP7 complex associates with the 66S pre-ribosome. Interacts (via UBL domain) with MDN1 (via VWFA/MIDAS domain).

The protein resides in the nucleus. It localises to the nucleolus. Its subcellular location is the nucleoplasm. Its function is as follows. Component of the NOP7 complex, which is required for maturation of the 25S and 5.8S ribosomal RNAs and formation of the 60S ribosome. The sequence is that of Ribosome biogenesis protein YTM1 from Saccharomyces cerevisiae (strain YJM789) (Baker's yeast).